The chain runs to 207 residues: BTB/POZ domain-containing protein At1g01640 (207 aa).

Positions T24–Y94 constitute a BTB domain.

In terms of assembly, interacts with CUL3A.

The protein operates within protein modification; protein ubiquitination. Its function is as follows. May act as a substrate-specific adapter of an E3 ubiquitin-protein ligase complex (CUL3-RBX1-BTB) which mediates the ubiquitination and subsequent proteasomal degradation of target proteins. The sequence is that of BTB/POZ domain-containing protein At1g01640 from Arabidopsis thaliana (Mouse-ear cress).